Consider the following 270-residue polypeptide: Dermonecrotic toxin LsaSicTox-alphaIB1av (270 aa).

The active site involves H2. The Mg(2+) site is built by E22 and D24. H38 functions as the Nucleophile in the catalytic mechanism. 2 disulfide bridges follow: C42–C48 and C44–C187. D82 serves as a coordination point for Mg(2+).

It belongs to the arthropod phospholipase D family. Class II subfamily. Mg(2+) is required as a cofactor. In terms of tissue distribution, expressed by the venom gland.

Its subcellular location is the secreted. It catalyses the reaction an N-(acyl)-sphingosylphosphocholine = an N-(acyl)-sphingosyl-1,3-cyclic phosphate + choline. It carries out the reaction an N-(acyl)-sphingosylphosphoethanolamine = an N-(acyl)-sphingosyl-1,3-cyclic phosphate + ethanolamine. The catalysed reaction is a 1-acyl-sn-glycero-3-phosphocholine = a 1-acyl-sn-glycero-2,3-cyclic phosphate + choline. The enzyme catalyses a 1-acyl-sn-glycero-3-phosphoethanolamine = a 1-acyl-sn-glycero-2,3-cyclic phosphate + ethanolamine. In terms of biological role, dermonecrotic toxins cleave the phosphodiester linkage between the phosphate and headgroup of certain phospholipids (sphingolipid and lysolipid substrates), forming an alcohol (often choline) and a cyclic phosphate. This toxin acts on sphingomyelin (SM). It may also act on ceramide phosphoethanolamine (CPE), lysophosphatidylcholine (LPC) and lysophosphatidylethanolamine (LPE), but not on lysophosphatidylserine (LPS), and lysophosphatidylglycerol (LPG). It acts by transphosphatidylation, releasing exclusively cyclic phosphate products as second products. Induces dermonecrosis, hemolysis, increased vascular permeability, edema, inflammatory response, and platelet aggregation. The polypeptide is Dermonecrotic toxin LsaSicTox-alphaIB1av (Loxosceles sabina (Tucson recluse spider)).